The chain runs to 509 residues: uncharacterized protein (509 aa).

An RNase NYN domain is found at 358–480 (RRIVIIDAIS…IIPFIVENGE (123 aa)).

This is an uncharacterized protein from Methanocaldococcus jannaschii (strain ATCC 43067 / DSM 2661 / JAL-1 / JCM 10045 / NBRC 100440) (Methanococcus jannaschii).